Reading from the N-terminus, the 175-residue chain is 2-oxo-4-hydroxy-4-carboxy-5-ureidoimidazoline decarboxylase (175 aa).

The active-site Proton donor is histidine 67. Substrate-binding positions include proline 68, 84 to 88 (SRGEQ), and 119 to 123 (FVICA). The Microbody targeting signal motif lies at 173–175 (TKL).

It belongs to the OHCU decarboxylase family. In terms of assembly, homodimer.

It localises to the peroxisome. It catalyses the reaction 5-hydroxy-2-oxo-4-ureido-2,5-dihydro-1H-imidazole-5-carboxylate + H(+) = (S)-allantoin + CO2. It participates in purine metabolism; urate degradation; (S)-allantoin from urate: step 3/3. Its function is as follows. Catalyzes the stereoselective decarboxylation of 2-oxo-4-hydroxy-4-carboxy-5-ureidoimidazoline (OHCU) to (S)-allantoin. The polypeptide is 2-oxo-4-hydroxy-4-carboxy-5-ureidoimidazoline decarboxylase (urad) (Amia calva (Bowfin)).